The chain runs to 156 residues: Ribonuclease pancreatic (156 aa).

The signal sequence occupies residues 1 to 28 (MALEKSLALLPLLVLVLLVLGWVQPSLG). Over residues 33–43 (AKKFQRQHMDS) the composition is skewed to basic and acidic residues. Residues 33–52 (AKKFQRQHMDSDGSPSSNPT) are disordered. Positions 35 and 38 each coordinate substrate. H40 (proton acceptor) is an active-site residue. 4 disulfides stabilise this stretch: C54–C112, C68–C123, C86–C138, and C93–C100. N62 is a glycosylation site (N-linked (GlcNAc...) asparagine). A substrate-binding site is contributed by 69 to 73 (KPVNT). An N-linked (GlcNAc...) asparagine glycan is attached at N90. The substrate site is built by K94 and R113. N116 is a glycosylation site (N-linked (GlcNAc...) asparagine). The Proton donor role is filled by H147.

It belongs to the pancreatic ribonuclease family. As to quaternary structure, monomer. Interacts with and forms tight 1:1 complexes with RNH1. Dimerization of two such complexes may occur. Interaction with RNH1 inhibits this protein.

The protein localises to the secreted. It catalyses the reaction an [RNA] containing cytidine + H2O = an [RNA]-3'-cytidine-3'-phosphate + a 5'-hydroxy-ribonucleotide-3'-[RNA].. The catalysed reaction is an [RNA] containing uridine + H2O = an [RNA]-3'-uridine-3'-phosphate + a 5'-hydroxy-ribonucleotide-3'-[RNA].. Endonuclease that catalyzes the cleavage of RNA on the 3' side of pyrimidine nucleotides. Acts on single-stranded and double-stranded RNA. The protein is Ribonuclease pancreatic (RNASE1) of Ateles geoffroyi (Black-handed spider monkey).